We begin with the raw amino-acid sequence, 125 residues long: Snaclec B6 (125 aa).

Disulfide bonds link C2–C13, C30–C119, and C96–C111. The C-type lectin domain occupies 9–120; that stretch reads HEGHCYKVFK…CNISQYFVCQ (112 aa). An N-linked (GlcNAc...) asparagine glycan is attached at N95. The N-linked (GlcNAc...) asparagine glycan is linked to N112.

Belongs to the snaclec family. In terms of assembly, heterodimer; disulfide-linked. In terms of tissue distribution, expressed by the venom gland.

It is found in the secreted. Interferes with one step of hemostasis (modulation of platelet aggregation, or coagulation cascade, for example). In Macrovipera lebetinus (Levantine viper), this protein is Snaclec B6.